The primary structure comprises 66 residues: Photosystem II reaction center protein J (66 aa).

Residues 37 to 57 traverse the membrane as a helical segment; that stretch reads LWLVATAGGMAVIFVVGLFFY.

The protein belongs to the PsbJ family. As to quaternary structure, PSII is composed of 1 copy each of membrane proteins PsbA, PsbB, PsbC, PsbD, PsbE, PsbF, PsbH, PsbI, PsbJ, PsbK, PsbL, PsbM, PsbT, PsbX, PsbY, PsbZ, Psb30/Ycf12, peripheral proteins PsbO, CyanoQ (PsbQ), PsbU, PsbV and a large number of cofactors. It forms dimeric complexes.

The protein resides in the cellular thylakoid membrane. Functionally, one of the components of the core complex of photosystem II (PSII). PSII is a light-driven water:plastoquinone oxidoreductase that uses light energy to abstract electrons from H(2)O, generating O(2) and a proton gradient subsequently used for ATP formation. It consists of a core antenna complex that captures photons, and an electron transfer chain that converts photonic excitation into a charge separation. The polypeptide is Photosystem II reaction center protein J (Synechococcus sp. (strain CC9311)).